The primary structure comprises 101 residues: Small ribosomal subunit protein uS14 (101 aa).

This sequence belongs to the universal ribosomal protein uS14 family. Part of the 30S ribosomal subunit. Contacts proteins S3 and S10.

Binds 16S rRNA, required for the assembly of 30S particles and may also be responsible for determining the conformation of the 16S rRNA at the A site. This is Small ribosomal subunit protein uS14 from Dechloromonas aromatica (strain RCB).